The following is a 694-amino-acid chain: GRB2-associated-binding protein 1 (694 aa).

Ser2 bears the N-acetylserine mark. The PH domain maps to 5–116; that stretch reads EVVCSGWLRK…WVRCICDICG (112 aa). Disordered regions lie at residues 122-164 and 194-231; these read EDPV…PYQL and PEPT…SKHG. Over residues 145 to 157 the composition is skewed to polar residues; the sequence is APPSTQADSSSAT. The segment covering 194–203 has biased composition (basic and acidic residues); it reads PEPTRTHADS. Residues 204 to 231 show a composition bias toward polar residues; sequence AKSTSSETDCNDNVPSHKNPASSQSKHG. 4 positions are modified to phosphoserine: Ser251, Ser253, Ser266, and Ser304. The interval 323–386 is disordered; sequence FPEGTLGQTS…TAGMSPSRSN (64 aa). Positions 362–386 are enriched in polar residues; that stretch reads IPRTASDTDSSYCIPTAGMSPSRSN. Thr387 bears the Phosphothreonine mark. 2 positions are modified to phosphoserine: Ser402 and Ser454. 2 disordered regions span residues 493–532 and 544–656; these read AHMG…VKPA and ELQA…ADER. Ala547 carries the phosphoserine modification. Residues 594-611 show a composition bias toward polar residues; it reads PNLSSEDPNLFGSNSLDG. Phosphotyrosine is present on Tyr627. A Phosphothreonine modification is found at Thr638. The residue at position 651 (Ser651) is a Phosphoserine. Tyr659 carries the post-translational modification Phosphotyrosine. A disordered region spans residues 671–694; sequence KSTREAWTDGRQSTESETPAKSVK. Residues 672–684 are compositionally biased toward basic and acidic residues; sequence STREAWTDGRQST. Ser683 is subject to Phosphoserine. Positions 685–694 are enriched in polar residues; it reads ESETPAKSVK.

This sequence belongs to the GAB family. In terms of assembly, identified in a complex containing FRS2, GRB2, GAB1, PIK3R1 and SOS1. Forms a tripartite complex containing GAB1, METTL13 and SPRY2. Within the complex interacts with METTL13. Interacts with GRB2 and with other SH2-containing proteins. Interacts with phosphorylated LAT2. Interacts with PTPRJ. Interacts (phosphorylated) with PTPN11. Interacts with HCK. Phosphorylated in response to FGFR1 activation. Phosphorylated on tyrosine residue(s) by the epidermal growth factor receptor (EGFR) and the insulin receptor (INSR). Tyrosine phosphorylation of GAB1 mediates interaction with several proteins that contain SH2 domains. Phosphorylated on tyrosine residues by HCK upon IL6 signaling.

Functionally, adapter protein that plays a role in intracellular signaling cascades triggered by activated receptor-type kinases. Plays a role in FGFR1 signaling. Probably involved in signaling by the epidermal growth factor receptor (EGFR) and the insulin receptor (INSR). Involved in the MET/HGF-signaling pathway. The sequence is that of GRB2-associated-binding protein 1 (GAB1) from Homo sapiens (Human).